The chain runs to 203 residues: Peptidyl-tRNA hydrolase (203 aa).

Y16 serves as a coordination point for tRNA. The active-site Proton acceptor is the H21. TRNA is bound by residues Y68, N70, and N116.

The protein belongs to the PTH family. Monomer.

The protein resides in the cytoplasm. It catalyses the reaction an N-acyl-L-alpha-aminoacyl-tRNA + H2O = an N-acyl-L-amino acid + a tRNA + H(+). In terms of biological role, hydrolyzes ribosome-free peptidyl-tRNAs (with 1 or more amino acids incorporated), which drop off the ribosome during protein synthesis, or as a result of ribosome stalling. Functionally, catalyzes the release of premature peptidyl moieties from peptidyl-tRNA molecules trapped in stalled 50S ribosomal subunits, and thus maintains levels of free tRNAs and 50S ribosomes. This Nostoc sp. (strain PCC 7120 / SAG 25.82 / UTEX 2576) protein is Peptidyl-tRNA hydrolase.